The sequence spans 191 residues: Xanthine phosphoribosyltransferase (191 aa).

2 residues coordinate xanthine: L20 and N27. 128–132 (ANGQA) lines the 5-phospho-alpha-D-ribose 1-diphosphate pocket. K156 serves as a coordination point for xanthine.

It belongs to the purine/pyrimidine phosphoribosyltransferase family. Xpt subfamily. In terms of assembly, homodimer.

Its subcellular location is the cytoplasm. The enzyme catalyses XMP + diphosphate = xanthine + 5-phospho-alpha-D-ribose 1-diphosphate. Its pathway is purine metabolism; XMP biosynthesis via salvage pathway; XMP from xanthine: step 1/1. Its function is as follows. Converts the preformed base xanthine, a product of nucleic acid breakdown, to xanthosine 5'-monophosphate (XMP), so it can be reused for RNA or DNA synthesis. The chain is Xanthine phosphoribosyltransferase from Levilactobacillus brevis (strain ATCC 367 / BCRC 12310 / CIP 105137 / JCM 1170 / LMG 11437 / NCIMB 947 / NCTC 947) (Lactobacillus brevis).